Consider the following 227-residue polypeptide: N-acetyltransferase family 8 member 7 (227 aa).

The next 2 membrane-spanning stretches (helical) occupy residues 36-56 and 58-78; these read MLLLPRTLLLLLGVPLTLFLA and GSWLLVLLSILTLFLSLWFLA. In terms of domain architecture, N-acetyltransferase spans 61 to 220; the sequence is LLVLLSILTL…PMINLKYSLT (160 aa).

This sequence belongs to the camello family.

The protein resides in the membrane. The enzyme catalyses L-lysyl-[protein] + acetyl-CoA = N(6)-acetyl-L-lysyl-[protein] + CoA + H(+). In terms of biological role, has histone acetyltransferase activity in vitro, with specificity for histone H4. This Mus musculus (Mouse) protein is N-acetyltransferase family 8 member 7.